Here is a 199-residue protein sequence, read N- to C-terminus: Puromycin N-acetyltransferase (199 aa).

One can recognise an N-acetyltransferase domain in the interval 6 to 198; the sequence is PTVRLATRDD…RTWCMTRKPG (193 aa).

Functionally, detoxification of puromycin. This chain is Puromycin N-acetyltransferase (pac), found in Streptomyces alboniger.